A 1486-amino-acid polypeptide reads, in one-letter code: Chromosome partition protein MukB (1486 aa).

34–41 (GGNGAGKS) contributes to the ATP binding site. Coiled coils occupy residues 326 to 418 (LEAD…QYNQ), 444 to 480 (LETF…QAYQ), and 509 to 603 (RHLA…RAPV). Residues 666–783 (PGGSEDQRLN…EVPLFGRAAR (118 aa)) form a flexible hinge region. Coiled-coil stretches lie at residues 835–923 (EAEI…AKLE), 977–1115 (EMLS…TAKA), and 1209–1265 (VEAI…LQSV).

Belongs to the SMC family. MukB subfamily. As to quaternary structure, homodimerization via its hinge domain. Binds to DNA via its C-terminal region. Interacts, and probably forms a ternary complex, with MukE and MukF via its C-terminal region. The complex formation is stimulated by calcium or magnesium. Interacts with tubulin-related protein FtsZ.

The protein localises to the cytoplasm. It is found in the nucleoid. In terms of biological role, plays a central role in chromosome condensation, segregation and cell cycle progression. Functions as a homodimer, which is essential for chromosome partition. Involved in negative DNA supercoiling in vivo, and by this means organize and compact chromosomes. May achieve or facilitate chromosome segregation by condensation DNA from both sides of a centrally located replisome during cell division. This is Chromosome partition protein MukB from Escherichia coli O7:K1 (strain IAI39 / ExPEC).